Reading from the N-terminus, the 362-residue chain is Aminomethyltransferase (362 aa).

The protein belongs to the GcvT family. The glycine cleavage system is composed of four proteins: P, T, L and H.

The catalysed reaction is N(6)-[(R)-S(8)-aminomethyldihydrolipoyl]-L-lysyl-[protein] + (6S)-5,6,7,8-tetrahydrofolate = N(6)-[(R)-dihydrolipoyl]-L-lysyl-[protein] + (6R)-5,10-methylene-5,6,7,8-tetrahydrofolate + NH4(+). Functionally, the glycine cleavage system catalyzes the degradation of glycine. The sequence is that of Aminomethyltransferase from Chromobacterium violaceum (strain ATCC 12472 / DSM 30191 / JCM 1249 / CCUG 213 / NBRC 12614 / NCIMB 9131 / NCTC 9757 / MK).